The following is a 280-amino-acid chain: MDVYFFVMEITSFLKLLSQTDGFGFGIFVIGCSSQFFNLVFLCCLLLLGLKFLSFKGTSLFLQYLEKINRISPNIEFFNSFNREHKDCNNNNNNNNNNNGFISKSHLADGLDQKKPIILHWSSDSTNRLSWENCDLLLLRDGLDHIQNRENTVALSETELDEKNHHGEEEESEDEEESQSQNDEDQLLDVITLRTMVKRERKRGDYMKKELEKERRAAESAAEEAMAMLLKLRMEKSVVEMETKQYKRVAEQKQVYDQEVIQSLQWMLMKLDDDEDKIQM.

Residues 22 to 42 form a helical membrane-spanning segment; the sequence is GFGFGIFVIGCSSQFFNLVFL. The disordered stretch occupies residues 153 to 187; the sequence is VALSETELDEKNHHGEEEESEDEEESQSQNDEDQL. Positions 169–187 are enriched in acidic residues; the sequence is EEESEDEEESQSQNDEDQL. The region spanning 188–280 is the GTD-binding domain; it reads LDVITLRTMV…LDDDEDKIQM (93 aa).

It is found in the membrane. The sequence is that of Protein FLOURY 1-like from Arabidopsis thaliana (Mouse-ear cress).